A 400-amino-acid chain; its full sequence is MQYTYQHIQDLVPGPTPQNFYGKIIFIKKKINQIVVLIKDETQSIYLRVIPKEDQELEFQLRQVVRVHRCKIQSILNSKEGIAQIGLFGCHLIAWSQSGKVDNPVIISSRSWTKSDEDSERLQTLRKLGKSRRKSGRKTSVDTMANKLIERREAMFADTFIKSLFNKIALSRKEHLSRNARELFYHRPGDIVETQNLLEIDDSWFNDENSEQFVQYVLNCTTCHVEYNHVEYAQNNIPTNCRFCQEAMESFHAAFRIRISIETYGVFLTIPLELIKTELDICEDWDSESNIVEEEEKVTRFKKNIQEKVRDASIVHIKGISSLLLIIMLNINSISLVNNITENKRILLQKSNVPSSLQLKILITPFVIVVVRFFGITWIYSGSSCIEEVLNLIDNCSRRR.

It belongs to the telombin family. In terms of tissue distribution, expressed in sperm and oocytes.

It localises to the nucleus. It is found in the nucleus envelope. Its subcellular location is the chromosome. The protein resides in the telomere. Its function is as follows. Telomeric DNA-binding protein, which binds to single-stranded C-rich repeat sequences, with high specificity to the 5'-GCCTAA-3' sequence. Repeat sequence binding can be at the 5' or 3' telomeric end. May have a role in protecting the 5' end of the C-rich strand of the telomere. Acts redundantly with pot-2 to negatively regulate telomerase-mediated telomere extension. Also regulates telomere length by the telomerase-independent telomere maintenance pathway called ALT (alternative lengthening of telomeres). Through sun-1, anchors telomeres to the nuclear envelope in embryos. In Caenorhabditis elegans, this protein is Protection of telomeres homolog 1.